The chain runs to 690 residues: Phosphate acetyltransferase (690 aa).

The phosphate acetyltransferase stretch occupies residues 365-690 (MFTYRLLQQA…TAIQAQGVHE (326 aa)).

The protein in the N-terminal section; belongs to the CobB/CobQ family. This sequence in the C-terminal section; belongs to the phosphate acetyltransferase and butyryltransferase family.

It localises to the cytoplasm. It carries out the reaction acetyl-CoA + phosphate = acetyl phosphate + CoA. Its pathway is metabolic intermediate biosynthesis; acetyl-CoA biosynthesis; acetyl-CoA from acetate: step 2/2. Functionally, involved in acetate metabolism. In Mycobacterium tuberculosis (strain CDC 1551 / Oshkosh), this protein is Phosphate acetyltransferase (pta).